The primary structure comprises 290 residues: Ig delta chain C region membrane-bound form (290 aa).

An Ig-like 1 domain is found at 5–105; the sequence is PDMFLLSECK…WDSQSSKRVT (101 aa). Cys26 and Cys78 are joined by a disulfide. Asn58 and Asn75 each carry an N-linked (GlcNAc...) asparagine glycan. The disordered stretch occupies residues 89 to 111; it reads PFKFPESWDSQSSKRVTPTLQAK. The segment covering 96–111 has biased composition (polar residues); the sequence is WDSQSSKRVTPTLQAK. N-linked (GlcNAc...) asparagine glycosylation is found at Asn112, Asn135, and Asn227. The 101-residue stretch at 133-233 folds into the Ig-like 2 domain; it reads PSNLTVNILT…TKLNASKSLA (101 aa). Residues 262–279 traverse the membrane as a helical segment; that stretch reads GLWPTMCTFVALFLLTLL. The Cytoplasmic segment spans residues 280–290; that stretch reads YSGFVTFIKVK.

As to expression, cell lines producing IgD contain several mRNA species for Ig delta chains. In plasmacytomas, the secreted form is the major component, and the membrane-bound form is a minor component. In spleen, however, the membrane-bound form is the major component. These two forms differ in their C-terminal segments.

The protein resides in the cell membrane. In Mus musculus (Mouse), this protein is Ig delta chain C region membrane-bound form.